The following is a 513-amino-acid chain: Glycogen synthase (513 aa).

K47 lines the ADP-alpha-D-glucose pocket.

It belongs to the glycosyltransferase 1 family. Bacterial/plant glycogen synthase subfamily.

The enzyme catalyses [(1-&gt;4)-alpha-D-glucosyl](n) + ADP-alpha-D-glucose = [(1-&gt;4)-alpha-D-glucosyl](n+1) + ADP + H(+). The protein operates within glycan biosynthesis; glycogen biosynthesis. Synthesizes alpha-1,4-glucan chains using ADP-glucose. This chain is Glycogen synthase, found in Pseudomonas paraeruginosa (strain DSM 24068 / PA7) (Pseudomonas aeruginosa (strain PA7)).